A 216-amino-acid polypeptide reads, in one-letter code: Elongation factor Ts (216 aa).

Residues 81-84 form an involved in Mg(2+) ion dislocation from EF-Tu region; the sequence is TDFV.

The protein belongs to the EF-Ts family.

The protein resides in the cytoplasm. Associates with the EF-Tu.GDP complex and induces the exchange of GDP to GTP. It remains bound to the aminoacyl-tRNA.EF-Tu.GTP complex up to the GTP hydrolysis stage on the ribosome. In Geotalea daltonii (strain DSM 22248 / JCM 15807 / FRC-32) (Geobacter daltonii), this protein is Elongation factor Ts.